The sequence spans 286 residues: Diaminopimelate epimerase (286 aa).

N22, Q56, and N76 together coordinate substrate. Catalysis depends on C85, which acts as the Proton donor. Substrate is bound by residues 86–87 (GN), N169, N202, and 220–221 (ER). Residue C229 is the Proton acceptor of the active site. 230–231 (GS) is a binding site for substrate.

Belongs to the diaminopimelate epimerase family. As to quaternary structure, homodimer.

It is found in the cytoplasm. The enzyme catalyses (2S,6S)-2,6-diaminopimelate = meso-2,6-diaminopimelate. It participates in amino-acid biosynthesis; L-lysine biosynthesis via DAP pathway; DL-2,6-diaminopimelate from LL-2,6-diaminopimelate: step 1/1. In terms of biological role, catalyzes the stereoinversion of LL-2,6-diaminopimelate (L,L-DAP) to meso-diaminopimelate (meso-DAP), a precursor of L-lysine and an essential component of the bacterial peptidoglycan. The chain is Diaminopimelate epimerase from Buchnera aphidicola subsp. Baizongia pistaciae (strain Bp).